The chain runs to 763 residues: Polyribonucleotide nucleotidyltransferase (763 aa).

Positions 526 and 532 each coordinate Mg(2+). Residues 592-651 (PRITTIKVPVDKIGEVIGPKGKMINSITEETGAQISIEDDGTVFVGAADGLSAQAAIDKI) enclose the KH domain. Positions 663–732 (GERFLGTVVK…NRGKISLVLV (70 aa)) constitute an S1 motif domain. Positions 739–763 (SAESAGDKGAEKAEGAAADVTPAEA) are disordered. Over residues 743-752 (AGDKGAEKAE) the composition is skewed to basic and acidic residues.

The protein belongs to the polyribonucleotide nucleotidyltransferase family. It depends on Mg(2+) as a cofactor.

Its subcellular location is the cytoplasm. It catalyses the reaction RNA(n+1) + phosphate = RNA(n) + a ribonucleoside 5'-diphosphate. Its function is as follows. Involved in mRNA degradation. Catalyzes the phosphorolysis of single-stranded polyribonucleotides processively in the 3'- to 5'-direction. The protein is Polyribonucleotide nucleotidyltransferase of Mycolicibacterium smegmatis (strain ATCC 700084 / mc(2)155) (Mycobacterium smegmatis).